The sequence spans 299 residues: Probable plastid-lipid-associated protein 13, chloroplastic (299 aa).

The transit peptide at 1–48 (MALIHGSVPGTSAVRLVFSTSASPSRFCLNVPVVKQGWKNSCRRRVLR) directs the protein to the chloroplast. An N-acetylvaline modification is found at Ala2.

The protein belongs to the PAP/fibrillin family.

It localises to the plastid. The protein resides in the chloroplast. The protein localises to the plastoglobule. This chain is Probable plastid-lipid-associated protein 13, chloroplastic (PAP13), found in Arabidopsis thaliana (Mouse-ear cress).